The following is a 362-amino-acid chain: Peptide chain release factor 1 (362 aa).

An N5-methylglutamine modification is found at Gln237.

The protein belongs to the prokaryotic/mitochondrial release factor family. Methylated by PrmC. Methylation increases the termination efficiency of RF1.

Its subcellular location is the cytoplasm. Functionally, peptide chain release factor 1 directs the termination of translation in response to the peptide chain termination codons UAG and UAA. The sequence is that of Peptide chain release factor 1 from Legionella pneumophila (strain Corby).